The primary structure comprises 165 residues: Glutamyl-tRNA(Gln) amidotransferase subunit F, mitochondrial (165 aa).

The segment covering 137–153 (VSDQRGERGFDTSELRT) has biased composition (basic and acidic residues). Positions 137–165 (VSDQRGERGFDTSELRTRINRAKSTAEKE) are disordered.

Belongs to the GatF family. In terms of assembly, subunit of the heterotrimeric GatFAB amidotransferase (AdT) complex, composed of A, B and F subunits.

It localises to the mitochondrion inner membrane. It carries out the reaction L-glutamyl-tRNA(Gln) + L-glutamine + ATP + H2O = L-glutaminyl-tRNA(Gln) + L-glutamate + ADP + phosphate + H(+). In terms of biological role, allows the formation of correctly charged Gln-tRNA(Gln) through the transamidation of misacylated Glu-tRNA(Gln) in the mitochondria. The reaction takes place in the presence of glutamine and ATP through an activated gamma-phospho-Glu-tRNA(Gln). Required for proper protein synthesis within the mitochondrion. The polypeptide is Glutamyl-tRNA(Gln) amidotransferase subunit F, mitochondrial (Clavispora lusitaniae (strain ATCC 42720) (Yeast)).